An 872-amino-acid polypeptide reads, in one-letter code: Alanine--tRNA ligase (872 aa).

His-561, His-565, Cys-662, and His-666 together coordinate Zn(2+).

Belongs to the class-II aminoacyl-tRNA synthetase family. Zn(2+) is required as a cofactor.

The protein resides in the cytoplasm. It carries out the reaction tRNA(Ala) + L-alanine + ATP = L-alanyl-tRNA(Ala) + AMP + diphosphate. Catalyzes the attachment of alanine to tRNA(Ala) in a two-step reaction: alanine is first activated by ATP to form Ala-AMP and then transferred to the acceptor end of tRNA(Ala). Also edits incorrectly charged Ser-tRNA(Ala) and Gly-tRNA(Ala) via its editing domain. This is Alanine--tRNA ligase from Thiobacillus denitrificans (strain ATCC 25259 / T1).